The sequence spans 327 residues: Malate dehydrogenase (327 aa).

11 to 17 (GAAGQIS) is a binding site for NAD(+). Positions 92 and 98 each coordinate substrate. NAD(+) is bound by residues Asn105, Gln112, and 129 to 131 (VGN). The substrate site is built by Asn131 and Arg162. His187 serves as the catalytic Proton acceptor.

This sequence belongs to the LDH/MDH superfamily. MDH type 2 family.

The catalysed reaction is (S)-malate + NAD(+) = oxaloacetate + NADH + H(+). In terms of biological role, catalyzes the reversible oxidation of malate to oxaloacetate. In Saccharophagus degradans (strain 2-40 / ATCC 43961 / DSM 17024), this protein is Malate dehydrogenase.